The primary structure comprises 339 residues: Dihydroorotate dehydrogenase (quinone) (339 aa).

FMN is bound by residues 61–65 (AGLDK) and Thr-85. Lys-65 provides a ligand contact to substrate. 110 to 114 (NRMGF) serves as a coordination point for substrate. FMN-binding residues include Asn-138 and Asn-171. Asn-171 is a substrate binding site. The active-site Nucleophile is the Ser-174. Asn-176 contacts substrate. FMN contacts are provided by Lys-216 and Thr-244. A substrate-binding site is contributed by 245 to 246 (NT). FMN is bound by residues Gly-267, Gly-296, and 317–318 (YS).

Belongs to the dihydroorotate dehydrogenase family. Type 2 subfamily. In terms of assembly, monomer. FMN serves as cofactor.

Its subcellular location is the cell membrane. It catalyses the reaction (S)-dihydroorotate + a quinone = orotate + a quinol. The protein operates within pyrimidine metabolism; UMP biosynthesis via de novo pathway; orotate from (S)-dihydroorotate (quinone route): step 1/1. Catalyzes the conversion of dihydroorotate to orotate with quinone as electron acceptor. This chain is Dihydroorotate dehydrogenase (quinone), found in Saccharophagus degradans (strain 2-40 / ATCC 43961 / DSM 17024).